The sequence spans 159 residues: Cytochrome c-type biogenesis protein CcmE (159 aa).

The Cytoplasmic portion of the chain corresponds to 1–8 (MNIRRKNR). A helical; Signal-anchor for type II membrane protein transmembrane segment spans residues 9–29 (LWIACAVLAGLALTIGLVLYA). Residues 30-159 (LRSNIDLFYT…PASVYKDPAS (130 aa)) are Periplasmic-facing. Residues histidine 130 and tyrosine 134 each coordinate heme. The segment covering 132 to 147 (ENYTPPEVEKAMEANH) has biased composition (basic and acidic residues). The tract at residues 132–159 (ENYTPPEVEKAMEANHRRPASVYKDPAS) is disordered.

Belongs to the CcmE/CycJ family.

The protein resides in the cell inner membrane. Functionally, heme chaperone required for the biogenesis of c-type cytochromes. Transiently binds heme delivered by CcmC and transfers the heme to apo-cytochromes in a process facilitated by CcmF and CcmH. In Shigella sonnei (strain Ss046), this protein is Cytochrome c-type biogenesis protein CcmE.